A 225-amino-acid chain; its full sequence is Uridylate kinase (225 aa).

9 to 10 provides a ligand contact to ATP; the sequence is GS. Residue Gly44 participates in UMP binding. Positions 45 and 49 each coordinate ATP. Residues Asp66 and 114–120 contribute to the UMP site; that span reads THPGHTT. ATP contacts are provided by Thr140, Asn141, Tyr146, and Asp149.

This sequence belongs to the UMP kinase family. Homohexamer.

Its subcellular location is the cytoplasm. It carries out the reaction UMP + ATP = UDP + ADP. It functions in the pathway pyrimidine metabolism; CTP biosynthesis via de novo pathway; UDP from UMP (UMPK route): step 1/1. With respect to regulation, inhibited by UTP. Catalyzes the reversible phosphorylation of UMP to UDP. The chain is Uridylate kinase from Thermococcus kodakarensis (strain ATCC BAA-918 / JCM 12380 / KOD1) (Pyrococcus kodakaraensis (strain KOD1)).